A 479-amino-acid chain; its full sequence is Glutamate--tRNA ligase 2 (479 aa).

The 'HIGH' region signature appears at 10 to 20 (PSPTGSLHIGG). Positions 243-247 (KLSKR) match the 'KMSKS' region motif. Lysine 246 is an ATP binding site.

The protein belongs to the class-I aminoacyl-tRNA synthetase family. Glutamate--tRNA ligase type 1 subfamily. Monomer.

The protein localises to the cytoplasm. The enzyme catalyses tRNA(Glu) + L-glutamate + ATP = L-glutamyl-tRNA(Glu) + AMP + diphosphate. Functionally, catalyzes the attachment of glutamate to tRNA(Glu) in a two-step reaction: glutamate is first activated by ATP to form Glu-AMP and then transferred to the acceptor end of tRNA(Glu). This Thermoanaerobacter pseudethanolicus (strain ATCC 33223 / 39E) (Clostridium thermohydrosulfuricum) protein is Glutamate--tRNA ligase 2.